Consider the following 408-residue polypeptide: DNA polymerase processivity factor (408 aa).

The Nuclear localization signal motif lies at 344–353 (KKRRNLLTKR).

This sequence belongs to the herpesviridae DNA polymerase processivity factor family. Interacts with the DNA polymerase catalytic subunit. Interacts with the origin-binding protein.

It is found in the host nucleus. Plays an essential role in viral DNA replication by acting as the polymerase accessory subunit. Associates with the viral polymerase to increase its processivity and forms high-affinity direct interactions with DNA. Facilitates the origin-binding protein loading onto DNA thus increasing its ability to assemble into a functional complex capable of unwinding duplex DNA. This Varicella-zoster virus (strain Dumas) (HHV-3) protein is DNA polymerase processivity factor.